The primary structure comprises 2016 residues: Sodium channel protein type 5 subunit alpha (2016 aa).

The Cytoplasmic segment spans residues 1–129 (MANFLLPRGT…IRRAAVKILV (129 aa)). Residues 28–56 (MAEKQARGSTTLQESREGLPEEEAPRPQL) form a disordered region. A Phosphoserine modification is found at Ser36. Thr38 carries the phosphothreonine modification. Residues 41–52 (ESREGLPEEEAP) are compositionally biased toward basic and acidic residues. The I repeat unit spans residues 113–420 (VLSPFHPIRR…VVAMAYEEQN (308 aa)). Residues 130-149 (HSLFNMLIMCTILTNCVFMA) form a helical membrane-spanning segment. Residues 150 to 157 (QHDPPPWT) are Extracellular-facing. Residues 158-179 (KYVEYTFTAIYTFESLVKILAR) traverse the membrane as a helical segment. At 180–188 (GFCLHAFTF) the chain is on the cytoplasmic side. The chain crosses the membrane as a helical span at residues 189 to 209 (LRDPWNWLDFSVIIMAYTTEF). Over 210-216 (VDLGNVS) the chain is Extracellular. N-linked (GlcNAc...) asparagine glycosylation is present at Asn214. The helical transmembrane segment at 217-236 (ALRTFRVLRALKTISVISGL) threads the bilayer. Residues 237–249 (KTIVGALIQSVKK) are Cytoplasmic-facing. The chain crosses the membrane as a helical span at residues 250–272 (LADVMVLTVFCLSVFALIGLQLF). The Extracellular portion of the chain corresponds to 273–357 (MGNLRHKCVR…PDHGYTSFDS (85 aa)). Cys280 and Cys335 form a disulfide bridge. Asn283, Asn288, Asn291, Asn318, and Asn328 each carry an N-linked (GlcNAc...) asparagine glycan. Positions 358–378 (FAWAFLALFRLMTQDCWERLY) form an intramembrane region, pore-forming. Residues 379–386 (QQTLRSAG) are Extracellular-facing. A helical transmembrane segment spans residues 387 to 413 (KIYMIFFMLVIFLGSFYLVNLILAVVA). The Cytoplasmic segment spans residues 414–719 (MAYEEQNQAT…VKLVVMDPFT (306 aa)). 4 positions are modified to phosphoserine: Ser457, Ser460, Ser483, and Ser484. Positions 461–591 (LEMSPLAPVN…APGHALHGKK (131 aa)) are disordered. The residue at position 486 (Thr486) is a Phosphothreonine. A compositionally biased stretch (basic and acidic residues) spans 491–503 (EDRLPKSDSEDGP). Phosphoserine occurs at positions 497 and 510. Residues 509–528 (LSLTRGLSRTSMKPRSSRGS) are compositionally biased toward polar residues. A dimethylated arginine; alternate mark is found at Arg513 and Arg526. Arg513 and Arg526 each carry omega-N-methylarginine; alternate. Phosphoserine occurs at positions 539, 571, 664, and 667. Positions 570–580 (TSAQGQPSPGT) are enriched in polar residues. Arg680 is modified (dimethylated arginine; alternate). Arg680 is modified (omega-N-methylarginine; alternate). The II repeat unit spans residues 699–969 (CCPLWMSIKQ…QLALARIQRG (271 aa)). Residues 720–737 (DLTITMCIVLNTLFMALE) traverse the membrane as a helical segment. The Extracellular segment spans residues 738–746 (HYNMTSEFE). Asn740 is a glycosylation site (N-linked (GlcNAc...) asparagine). The chain crosses the membrane as a helical span at residues 747–769 (EMLQVGNLVFTGIFTAEMTFKII). The Cytoplasmic segment spans residues 770–775 (ALDPYY). A helical membrane pass occupies residues 776 to 796 (YFQQGWNIFDSIIVILSLMEL). Over 797–806 (GLSRMSNLSV) the chain is Extracellular. The N-linked (GlcNAc...) asparagine glycan is linked to Asn803. Residues 807–821 (LRSFRLLRVFKLAKS) form a helical membrane-spanning segment. Over 822-838 (WPTLNTLIKIIGNSVGA) the chain is Cytoplasmic. A helical membrane pass occupies residues 839–860 (LGNLTLVLAIIVFIFAVVGMQL). Over 861–884 (FGKNYSELRDSDSGLLPRWHMMDF) the chain is Extracellular. Asn864 carries N-linked (GlcNAc...) asparagine glycosylation. An intramembrane region (pore-forming) is located at residues 885-903 (FHAFLIIFRILCGEWIETM). The Extracellular portion of the chain corresponds to 904–912 (WDCMEVSGQ). A disulfide bond links Cys906 and Cys915. A helical transmembrane segment spans residues 913 to 941 (SLCLLVFLLVMVIGNLVVLNLFLALLLSS). At 942 to 1203 (FSADNLTAPD…LRKTCYHIVE (262 aa)) the chain is on the cytoplasmic side. A disordered region spans residues 1005–1141 (IATPYSPPPP…PEDSCSEGST (137 aa)). The segment covering 1015 to 1030 (ETEKVPPTRKETRFEE) has biased composition (basic and acidic residues). Residues 1033 to 1044 (QPGQGTPGDPEP) show a composition bias toward low complexity. Positions 1054-1071 (SDTDDQEEDEENSLGTEE) are enriched in acidic residues. The segment covering 1096-1113 (SQVSATASSEAEASASQA) has biased composition (low complexity). An III repeat occupies 1187–1501 (PGKVWWRLRK…KKYYNAMKKL (315 aa)). A helical membrane pass occupies residues 1204–1225 (HSWFETFIIFMILLSSGALAFE). The Extracellular segment spans residues 1226–1236 (DIYLEERKTIK). Residues 1237–1259 (VLLEYADKMFTYVFVLEMLLKWV) traverse the membrane as a helical segment. Residues 1260–1268 (AYGFKKYFT) lie on the Cytoplasmic side of the membrane. The helical transmembrane segment at 1269–1291 (NAWCWLDFLIVDVSLVSLVANTL) threads the bilayer. The Extracellular portion of the chain corresponds to 1292–1297 (GFAEMG). Residues 1298–1317 (PIKSLRTLRALRPLRALSRF) form a helical membrane-spanning segment. The Cytoplasmic portion of the chain corresponds to 1318 to 1330 (EGMRVVVNALVGA). A helical membrane pass occupies residues 1331–1355 (IPSIMNVLLVCLIFWLIFSIMGVNL). The Extracellular segment spans residues 1356-1400 (FAGKFGRCINQTEGDLPLNYTIVNNKSQCESLNLTGELYWTKVKV). Residues Asn1365, Asn1374, Asn1380, and Asn1388 are each glycosylated (N-linked (GlcNAc...) asparagine). Positions 1401–1422 (NFDNVGAGYLALLQVATFKGWM) form an intramembrane region, pore-forming. The Extracellular segment spans residues 1423–1445 (DIMYAAVDSRGYEEQPQWEYNLY). A helical membrane pass occupies residues 1446 to 1470 (MYIYFVIFIIFGSFFTLNLFIGVII). At 1471–1528 (DNFNQQKKKLGGQDIFMTEEQKKYYNAMKKLGSKKPQKPIPRPLNKYQGFIFDIVTKQ) the chain is on the cytoplasmic side. Ser1503 is subject to Phosphoserine; by PKC. One copy of the IV repeat lies at 1510 to 1807 (IPRPLNKYQG…WEKFDPEATQ (298 aa)). The helical transmembrane segment at 1529–1547 (AFDVTIMFLICLNMVTMMV) threads the bilayer. At 1548–1558 (ETDDQSPEKIN) the chain is on the extracellular side. The helical transmembrane segment at 1559-1580 (ILAKINLLFVAIFTGECIVKLA) threads the bilayer. Residues 1581-1589 (ALRHYYFTN) lie on the Cytoplasmic side of the membrane. A helical membrane pass occupies residues 1590-1612 (SWNIFDFVVVILSIVGTVLSDII). Topologically, residues 1613 to 1619 (QKYFFSP) are extracellular. A helical membrane pass occupies residues 1620-1640 (TLFRVIRLARIGRILRLIRGA). At 1641-1650 (KGIRTLLFAL) the chain is on the cytoplasmic side. The helical transmembrane segment at 1651–1679 (MMSLPALFNIGLLLFLVMFIYSIFGMANF) threads the bilayer. The Extracellular segment spans residues 1680–1697 (AYVKWEAGIDDMFNFQTF). The segment at residues 1698 to 1714 (ANSMLCLFQITTSAGWD) is an intramembrane region (pore-forming). Residues 1715–1745 (GLLSPILNTGPPYCDPTLPNSNGSRGDCGSP) are Extracellular-facing. The N-linked (GlcNAc...) asparagine glycan is linked to Asn1736. The helical transmembrane segment at 1746 to 1771 (AVGILFFTTYIIISFLIVVNMYIAII) threads the bilayer. Residues 1772–2016 (LENFSVATEE…SPDRDRESIV (245 aa)) are Cytoplasmic-facing. Residues 1839–1901 (DLPMVSGDRI…ITTTLRRKHE (63 aa)) are interaction with FGF13. The IQ domain occupies 1901–1930 (EEVSAMVIQRAFRRHLLQRSLKHASFLFRQ). The span at 1959–1979 (PLGPPSSSSISSTSFPPSYDS) shows a compositional bias: low complexity. Residues 1959–2016 (PLGPPSSSSISSTSFPPSYDSVTRATSDNLQVRGSDYSHSEDLADFPPSPDRDRESIV) form a disordered region. The interval 1974–1977 (PPSY) is interaction with NEDD4, NEDD4L and WWP2. A compositionally biased stretch (polar residues) spans 1981–1990 (TRATSDNLQV).

It belongs to the sodium channel (TC 1.A.1.10) family. Nav1.5/SCN5A subfamily. In terms of assembly, cannot form the same regulatory interactions with beta subunits as other Navs do. Interacts with the PDZ domain of the syntrophin SNTA1, SNTB1 and SNTB2. Interacts with NEDD4, NEDD4L, WWP2 and GPD1L. Interacts with CALM. Interacts with FGF13; the interaction is direct and FGF13 may regulate SNC5A density at membranes and function. May also interact with FGF12 and FGF14. Interacts with TMEM233. Interacts with the spider Jingzhaotoxin-I (AC P83974, AC B1P1B7, AC B1P1B8). Interacts with ANK3. Interacts with PKP2 (via N-terminus). Interacts with XIRP2; the interaction is required for normal action potential configuration in the heart. Post-translationally, ubiquitinated by NEDD4L; which promotes its endocytosis. Does not seem to be ubiquitinated by NEDD4 or WWP2. Phosphorylation at Ser-1503 by PKC in a highly conserved cytoplasmic loop slows inactivation of the sodium channel and reduces peak sodium currents. Regulated through phosphorylation by CaMK2D. In terms of processing, lacks the cysteine which covalently binds the conotoxin GVIIJ. This cysteine (position 868) is speculated in other sodium channel subunits alpha to be implied in covalent binding with the sodium channel subunit beta-2 or beta-4. Post-translationally, N-glycosylated at Asn-318, probably hinders potential interaction with regulatory subunits. In terms of tissue distribution, found in jejunal circular smooth muscle cells (at protein level). Expressed in human atrial and ventricular cardiac muscle but not in adult skeletal muscle, brain, myometrium, liver, or spleen. Isoform 4 is expressed in brain.

The protein resides in the cell membrane. It localises to the cytoplasm. The protein localises to the perinuclear region. Its subcellular location is the sarcolemma. It is found in the T-tubule. The protein resides in the cell junction. The enzyme catalyses Na(+)(in) = Na(+)(out). With respect to regulation, channel inactivation is regulated by intracellular calcium levels. It is a tetrodotoxin-resistant voltage-gated Na(+) channel (Nav). In terms of biological role, pore-forming subunit of Nav1.5, a voltage-gated sodium (Nav) channel that directly mediates the depolarizing phase of action potentials in excitable membranes. Navs, also called VGSCs (voltage-gated sodium channels) or VDSCs (voltage-dependent sodium channels), operate by switching between closed and open conformations depending on the voltage difference across the membrane. In the open conformation they allow Na(+) ions to selectively pass through the pore, along their electrochemical gradient. The influx of Na(+) ions provokes membrane depolarization, initiating the propagation of electrical signals throughout cells and tissues. Nav1.5 is the predominant sodium channel expressed in myocardial cells and it is responsible for the initial upstroke of the action potential in cardiac myocytes, thereby initiating the heartbeat. Required for normal electrical conduction including formation of the infranodal ventricular conduction system and normal action potential configuration, as a result of its interaction with XIRP2. This chain is Sodium channel protein type 5 subunit alpha, found in Homo sapiens (Human).